A 374-amino-acid polypeptide reads, in one-letter code: tRNA-specific 2-thiouridylase MnmA (374 aa).

ATP contacts are provided by residues 17 to 24 and methionine 43; that span reads GMSGGVDS. Positions 103 to 105 are interaction with target base in tRNA; that stretch reads NPD. The active-site Nucleophile is cysteine 108. Residues cysteine 108 and cysteine 204 are joined by a disulfide bond. An ATP-binding site is contributed by glycine 132. The segment at 154 to 156 is interaction with tRNA; that stretch reads KDQ. Cysteine 204 (cysteine persulfide intermediate) is an active-site residue. Residues 316–317 form an interaction with tRNA region; it reads RY.

It belongs to the MnmA/TRMU family.

The protein localises to the cytoplasm. The catalysed reaction is S-sulfanyl-L-cysteinyl-[protein] + uridine(34) in tRNA + AH2 + ATP = 2-thiouridine(34) in tRNA + L-cysteinyl-[protein] + A + AMP + diphosphate + H(+). Functionally, catalyzes the 2-thiolation of uridine at the wobble position (U34) of tRNA, leading to the formation of s(2)U34. The sequence is that of tRNA-specific 2-thiouridylase MnmA from Pseudomonas putida (strain W619).